A 189-amino-acid polypeptide reads, in one-letter code: UPF0301 protein PFLU_5755 (189 aa).

It belongs to the UPF0301 (AlgH) family.

The chain is UPF0301 protein PFLU_5755 from Pseudomonas fluorescens (strain SBW25).